A 455-amino-acid chain; its full sequence is Tubulin alpha chain (455 aa).

Residues Gln11, Glu77, Ser145, Gly149, Thr150, Ser184, Asn211, and Asn233 each contribute to the GTP site. Glu77 contributes to the Mg(2+) binding site. Residue Glu259 is part of the active site.

It belongs to the tubulin family. As to quaternary structure, dimer of alpha and beta chains. A typical microtubule is a hollow water-filled tube with an outer diameter of 25 nm and an inner diameter of 15 nM. Alpha-beta heterodimers associate head-to-tail to form protofilaments running lengthwise along the microtubule wall with the beta-tubulin subunit facing the microtubule plus end conferring a structural polarity. Microtubules usually have 13 protofilaments but different protofilament numbers can be found in some organisms and specialized cells. Requires Mg(2+) as cofactor.

It is found in the cytoplasm. It localises to the cytoskeleton. It catalyses the reaction GTP + H2O = GDP + phosphate + H(+). Functionally, tubulin is the major constituent of microtubules, a cylinder consisting of laterally associated linear protofilaments composed of alpha- and beta-tubulin heterodimers. Microtubules grow by the addition of GTP-tubulin dimers to the microtubule end, where a stabilizing cap forms. Below the cap, tubulin dimers are in GDP-bound state, owing to GTPase activity of alpha-tubulin. The polypeptide is Tubulin alpha chain (Entamoeba histolytica (strain ATCC 30459 / HM-1:IMSS / ABRM)).